The following is a 376-amino-acid chain: dTDP-4-amino-4,6-dideoxygalactose transaminase (376 aa).

Lys181 is subject to N6-(pyridoxal phosphate)lysine.

It belongs to the DegT/DnrJ/EryC1 family. As to quaternary structure, homotetramer. The cofactor is pyridoxal 5'-phosphate.

The enzyme catalyses dTDP-4-amino-4,6-dideoxy-alpha-D-galactose + 2-oxoglutarate = dTDP-4-dehydro-6-deoxy-alpha-D-glucose + L-glutamate. It functions in the pathway bacterial outer membrane biogenesis; enterobacterial common antigen biosynthesis. In terms of biological role, catalyzes the synthesis of dTDP-4-amino-4,6-dideoxy-D-galactose (dTDP-Fuc4N) from dTDP-4-keto-6-deoxy-D-glucose (dTDP-D-Glc4O) and L-glutamate. In Escherichia coli (strain K12), this protein is dTDP-4-amino-4,6-dideoxygalactose transaminase.